A 372-amino-acid chain; its full sequence is Riboflavin biosynthesis protein RibD (372 aa).

A deaminase region spans residues 1–150; sequence MLEFSSQDCV…KGFLKRMRQG (150 aa). The 123-residue stretch at 6–128 folds into the CMP/dCMP-type deaminase domain; the sequence is SQDCVFMQRA…MLSDAGIEST (123 aa). A Zn(2+)-binding site is contributed by H55. Catalysis depends on E57, which acts as the Proton donor. Zn(2+) contacts are provided by C80 and C89. A reductase region spans residues 151-372; the sequence is MPFVQLKLAM…IKLTYTPKGV (222 aa). NADP(+)-binding positions include A159 and 166–169; that span reads TAMA. Position 173 (S173) interacts with substrate. W175 contacts NADP(+). Position 189 (R189) interacts with substrate. T201 and D205 together coordinate NADP(+). L209 and R212 together coordinate substrate. S239 serves as a coordination point for NADP(+). E302 lines the substrate pocket. An NADP(+)-binding site is contributed by 304–310; sequence GANLSGS.

It in the N-terminal section; belongs to the cytidine and deoxycytidylate deaminase family. In the C-terminal section; belongs to the HTP reductase family. Requires Zn(2+) as cofactor.

It catalyses the reaction 2,5-diamino-6-hydroxy-4-(5-phosphoribosylamino)-pyrimidine + H2O + H(+) = 5-amino-6-(5-phospho-D-ribosylamino)uracil + NH4(+). The catalysed reaction is 5-amino-6-(5-phospho-D-ribitylamino)uracil + NADP(+) = 5-amino-6-(5-phospho-D-ribosylamino)uracil + NADPH + H(+). It functions in the pathway cofactor biosynthesis; riboflavin biosynthesis; 5-amino-6-(D-ribitylamino)uracil from GTP: step 2/4. Its pathway is cofactor biosynthesis; riboflavin biosynthesis; 5-amino-6-(D-ribitylamino)uracil from GTP: step 3/4. In terms of biological role, converts 2,5-diamino-6-(ribosylamino)-4(3h)-pyrimidinone 5'-phosphate into 5-amino-6-(ribosylamino)-2,4(1h,3h)-pyrimidinedione 5'-phosphate. In Haemophilus influenzae (strain ATCC 51907 / DSM 11121 / KW20 / Rd), this protein is Riboflavin biosynthesis protein RibD (ribD).